Consider the following 241-residue polypeptide: Prolactin-8A8 (241 aa).

The first 30 residues, 1–30 (MELQFRQPHFSDALLLLLLSNLLLWEKASS), serve as a signal peptide directing secretion. Disulfide bonds link cysteine 34–cysteine 41, cysteine 101–cysteine 217, and cysteine 234–cysteine 241. N-linked (GlcNAc...) asparagine glycosylation is present at asparagine 213.

This sequence belongs to the somatotropin/prolactin family. As to expression, expressed specifically in the placenta. Predominantly expressed in spongiotrophoblast cells.

The protein localises to the secreted. This Mus musculus (Mouse) protein is Prolactin-8A8 (Prl8a8).